Reading from the N-terminus, the 279-residue chain is 3-methyl-2-oxobutanoate hydroxymethyltransferase (279 aa).

The Mg(2+) site is built by D43 and D82. Residues 43 to 44 (DS), D82, and K112 each bind 3-methyl-2-oxobutanoate. Mg(2+) is bound at residue E114. E181 serves as the catalytic Proton acceptor.

The protein belongs to the PanB family. Homodecamer; pentamer of dimers. It depends on Mg(2+) as a cofactor.

Its subcellular location is the cytoplasm. The catalysed reaction is 3-methyl-2-oxobutanoate + (6R)-5,10-methylene-5,6,7,8-tetrahydrofolate + H2O = 2-dehydropantoate + (6S)-5,6,7,8-tetrahydrofolate. The protein operates within cofactor biosynthesis; (R)-pantothenate biosynthesis; (R)-pantoate from 3-methyl-2-oxobutanoate: step 1/2. Its function is as follows. Catalyzes the reversible reaction in which hydroxymethyl group from 5,10-methylenetetrahydrofolate is transferred onto alpha-ketoisovalerate to form ketopantoate. In Shouchella clausii (strain KSM-K16) (Alkalihalobacillus clausii), this protein is 3-methyl-2-oxobutanoate hydroxymethyltransferase.